Reading from the N-terminus, the 403-residue chain is Semaphorin-like protein A39 (403 aa).

Residues 1–14 (MIPLLFILFYFANG) form the signal peptide. Residues 15–403 (IEWHKFETSE…MPQMKKILKM (389 aa)) enclose the Sema domain.

This sequence belongs to the semaphorin family. As to quaternary structure, interacts with host VESPR.

It localises to the secreted. In terms of biological role, acts as a semaphorin-like protein and binds to host plexin C1 receptor. May alter the movement of host plexin C1-expressing cells including dendritic cells, monocytes, or granulocytes in the proximity of infected cells. May also regulate host cell cytoskeleton of neighboring cells to improve viral infection. This Homo sapiens (Human) protein is Semaphorin-like protein A39.